A 286-amino-acid polypeptide reads, in one-letter code: NFU1 iron-sulfur cluster scaffold homolog, mitochondrial (286 aa).

Residues 1–66 (MSKLLTNTAL…RQIQLSGARN (66 aa)) constitute a mitochondrion transit peptide. The tract at residues 182 to 250 (IKELLDTRIR…IPEVESVEQV (69 aa)) is nifU. [4Fe-4S] cluster-binding residues include C219 and C222.

The protein belongs to the NifU family.

It localises to the mitochondrion. Molecular scaffold for [Fe-S] cluster assembly of mitochondrial iron-sulfur proteins. The chain is NFU1 iron-sulfur cluster scaffold homolog, mitochondrial from Drosophila ananassae (Fruit fly).